The sequence spans 440 residues: GTPase Der (440 aa).

2 EngA-type G domains span residues 3-168 (PIIA…GKMD) and 177-353 (LKLA…EEYT). GTP-binding positions include 9–16 (GRPNVGKS), 56–60 (DTGGL), 119–122 (NKID), 183–190 (GKPNAGKS), 230–234 (DTAGI), and 295–298 (NKWD). In terms of domain architecture, KH-like spans 354 to 438 (KRISTGLLNT…PIMISFENKS (85 aa)).

The protein belongs to the TRAFAC class TrmE-Era-EngA-EngB-Septin-like GTPase superfamily. EngA (Der) GTPase family. In terms of assembly, associates with the 50S ribosomal subunit.

In terms of biological role, GTPase that plays an essential role in the late steps of ribosome biogenesis. In Fusobacterium nucleatum subsp. nucleatum (strain ATCC 25586 / DSM 15643 / BCRC 10681 / CIP 101130 / JCM 8532 / KCTC 2640 / LMG 13131 / VPI 4355), this protein is GTPase Der.